The chain runs to 126 residues: Aspartate 1-decarboxylase (126 aa).

S25 functions as the Schiff-base intermediate with substrate; via pyruvic acid in the catalytic mechanism. The residue at position 25 (S25) is a Pyruvic acid (Ser). T57 is a binding site for substrate. Y58 serves as the catalytic Proton donor. Residue G73–A75 participates in substrate binding.

Belongs to the PanD family. Heterooctamer of four alpha and four beta subunits. The cofactor is pyruvate. Post-translationally, is synthesized initially as an inactive proenzyme, which is activated by self-cleavage at a specific serine bond to produce a beta-subunit with a hydroxyl group at its C-terminus and an alpha-subunit with a pyruvoyl group at its N-terminus.

It is found in the cytoplasm. The catalysed reaction is L-aspartate + H(+) = beta-alanine + CO2. It participates in cofactor biosynthesis; (R)-pantothenate biosynthesis; beta-alanine from L-aspartate: step 1/1. In terms of biological role, catalyzes the pyruvoyl-dependent decarboxylation of aspartate to produce beta-alanine. The polypeptide is Aspartate 1-decarboxylase (Photorhabdus laumondii subsp. laumondii (strain DSM 15139 / CIP 105565 / TT01) (Photorhabdus luminescens subsp. laumondii)).